The sequence spans 572 residues: MEYWKHTNHGKDAGNELETSMATHGNKLTNKITYILWTIILVLLSIVFIIVLINSIKSEKAHKSLLQDINNEFMEITEKIQMASDNTNDLIQSGVNTRLLTIQSHVQNYIPISLTQQMSDLRKFISEITIRNDNQEVPPQRIIHDVGIKPLNPDDFWRCTSGLPSLMRTPKIRLMPGPGLLAMPTTVDGCVRTPSLVINDLIYAYTSNLITRGCQDIGKSYQVLQIGIITVNSDLVPDLNPRISHTFNINDNRKSCSLALLNTDVYQLCSTPKVDERSDYASSGIEDIVLDIVNYDGSISTTRFKNNNISFDQPYAASYPSVGPGIYYKGKIIFLGYGGLEHPINENVICNTTGCPGKTQRDCNQASHSPWFSDRRMVNSIIVVDKGLNSIPKLKVWTISMRQNYWGSEGRLLLLGNKIYIYTRSTSWHSKLQLGIIDITDYSDIRIKWTWHNVLSRPGNNECPWGHSCPDGCITGVYTDAYPLNPTGSIVSSVILDSQKSRVNPVITYSTATERVNELAIRNRTLSAGYTTTSCITHYNKGYCFHIVEINHKSSNTFQPMLFKTEIPKSCS.

Over 1-31 (MEYWKHTNHGKDAGNELETSMATHGNKLTNK) the chain is Intravirion. A helical transmembrane segment spans residues 32 to 52 (ITYILWTIILVLLSIVFIIVL). At 53-572 (INSIKSEKAH…FKTEIPKSCS (520 aa)) the chain is on the virion surface side. 2 disulfides stabilise this stretch: Cys190–Cys214 and Cys256–Cys269. Positions 252–257 (NRKSCS) are involved in neuraminidase activity. N-linked (GlcNAc...) asparagine; by host glycans are attached at residues Asn308 and Asn351. Cystine bridges form between Cys355-Cys469 and Cys463-Cys473. A glycan (N-linked (GlcNAc...) asparagine; by host) is linked at Asn523. Cys535 and Cys544 are oxidised to a cystine.

The protein belongs to the paramyxoviruses hemagglutinin-neuraminidase family. In terms of assembly, homotetramer; composed of disulfide-linked homodimers. Interacts with F protein trimer.

It is found in the virion membrane. The protein localises to the host cell membrane. The enzyme catalyses Hydrolysis of alpha-(2-&gt;3)-, alpha-(2-&gt;6)-, alpha-(2-&gt;8)- glycosidic linkages of terminal sialic acid residues in oligosaccharides, glycoproteins, glycolipids, colominic acid and synthetic substrates.. Its function is as follows. Attaches the virus to sialic acid-containing cell receptors and thereby initiating infection. Binding of HN protein to the receptor induces a conformational change that allows the F protein to trigger virion/cell membranes fusion. Functionally, neuraminidase activity ensures the efficient spread of the virus by dissociating the mature virions from the neuraminic acid containing glycoproteins. This is Hemagglutinin-neuraminidase (HN) from Homo sapiens (Human).